Here is a 55-residue protein sequence, read N- to C-terminus: Large ribosomal subunit protein bL33 (55 aa).

Belongs to the bacterial ribosomal protein bL33 family.

The sequence is that of Large ribosomal subunit protein bL33 from Rhodopseudomonas palustris (strain BisB5).